Here is a 201-residue protein sequence, read N- to C-terminus: Recombination protein RecR (201 aa).

The C4-type zinc-finger motif lies at 58–73 (CPECGLLTEEERCGLC). Positions 81 to 176 (TLLCVVESSA…RTTRIAHGVP (96 aa)) constitute a Toprim domain.

It belongs to the RecR family.

May play a role in DNA repair. It seems to be involved in an RecBC-independent recombinational process of DNA repair. It may act with RecF and RecO. The protein is Recombination protein RecR of Halorhodospira halophila (strain DSM 244 / SL1) (Ectothiorhodospira halophila (strain DSM 244 / SL1)).